Consider the following 384-residue polypeptide: Gastrin-releasing peptide receptor (384 aa).

The Extracellular segment spans residues methionine 1–glycine 38. N-linked (GlcNAc...) asparagine glycosylation occurs at asparagine 20. The chain crosses the membrane as a helical span at residues isoleucine 39–isoleucine 62. Topologically, residues lysine 63 to asparagine 76 are cytoplasmic. Residues leucine 77–valine 96 form a helical membrane-spanning segment. The Extracellular segment spans residues aspartate 97–lysine 114. A disulfide bond links cysteine 113 and cysteine 196. Residues leucine 115–alanine 136 form a helical membrane-spanning segment. Over aspartate 137–histidine 152 the chain is Cytoplasmic. A helical membrane pass occupies residues alanine 153–proline 174. The Extracellular segment spans residues glutamate 175–lysine 208. The chain crosses the membrane as a helical span at residues isoleucine 209–alanine 234. Over lysine 235–lysine 264 the chain is Cytoplasmic. A helical membrane pass occupies residues threonine 265–leucine 285. At tyrosine 286–methionine 298 the chain is on the extracellular side. The chain crosses the membrane as a helical span at residues leucine 299–leucine 325. At serine 326–valine 384 the chain is on the cytoplasmic side. Cysteine 339 is lipidated: S-palmitoyl cysteine. Position 350 is a phosphoserine (serine 350).

Belongs to the G-protein coupled receptor 1 family. Highly expressed in pancreas. Also expressed in stomach, adrenal cortex and brain. In brain, expressed in cells throughout the cortex.

The protein localises to the cell membrane. Its function is as follows. Receptor for gastrin-releasing peptide (GRP). Signals via association with G proteins that activate a phosphatidylinositol-calcium second messenger system, resulting in Akt phosphorylation. Contributes to the regulation of food intake. Contributes to the perception of prurient stimuli and transmission of itch signals in the spinal cord that promote scratching behavior, but does not play a role in the perception of pain. Contributes primarily to nonhistaminergic itch sensation. In one study, shown to act in the amygdala as part of an inhibitory network which inhibits memory specifically related to learned fear. In another study, shown to contribute to disinhibition of glutamatergic cells in the auditory cortex via signaling on vasoactive intestinal peptide-expressing cells which leads to enhanced auditory fear memories. Contributes to the induction of sighing through signaling in the pre-Botzinger complex, a cluster of several thousand neurons in the ventrolateral medulla responsible for inspiration during respiratory activity. The chain is Gastrin-releasing peptide receptor (GRPR) from Homo sapiens (Human).